The following is a 458-amino-acid chain: Delta(8)-fatty-acid desaturase (458 aa).

The region spanning 16 to 100 is the Cytochrome b5 heme-binding domain; sequence KKYITSKELK…LKDYQVSDIS (85 aa). Residues His-51 and His-74 each contribute to the heme site. A run of 2 helical transmembrane segments spans residues 122 to 142 and 147 to 167; these read GVIY…YGVL and FWIH…IAYL. A Histidine box-1 motif is present at residues 169–173; the sequence is HDAGH. The chain crosses the membrane as a helical span at residues 185–205; it reads FAGIFIGNCITGISIAWWKWT. Residues 206–210 carry the Histidine box-2 motif; sequence HNAHH. A run of 3 helical transmembrane segments spans residues 264-284, 293-313, and 320-340; these read YYPI…LLLI, GLNI…VSRL, and VAFV…FTLN. The Histidine box-3 signature appears at 383–387; sequence QLEHH.

This sequence belongs to the fatty acid desaturase type 1 family. Fe cation is required as a cofactor.

It is found in the membrane. The enzyme catalyses an N-acyl-(4R)-4-hydroxysphinganine + 2 Fe(II)-[cytochrome b5] + O2 + 2 H(+) = a (4R,8E)-4-hydroxysphingenine ceramide + 2 Fe(III)-[cytochrome b5] + 2 H2O. The catalysed reaction is an N-acyl-(4R)-4-hydroxysphinganine + 2 Fe(II)-[cytochrome b5] + O2 + 2 H(+) = a (4R,8Z)-4-hydroxysphing-8-enine ceramide + 2 Fe(III)-[cytochrome b5] + 2 H2O. Its function is as follows. Plays a major role as delta(8)-fatty-acid desaturase which introduces a double bond at the 8-position in the long-chain base (LCB) of ceramides with or without a hydroxy group at the 4-position. The enzyme produces both the 8E and 8Z isomers. This structural modification contributes to the quantitative partitioning of ceramides between the two major sphingolipid classes, glucosylceramides and glycosylinositolphosphoryl ceramides. Sphingolipids are important membrane components involved in environmental stress responses, such as resistance to chilling, and act as cell signaling molecules. The chain is Delta(8)-fatty-acid desaturase (sld1) from Helianthus annuus (Common sunflower).